The chain runs to 278 residues: BPI fold-containing family A member 1 (278 aa).

The signal sequence occupies residues 1-19 (MFLVGSLVVLCGLLAHSTA). Repeat repeat units follow at residues 23–28 (GLPLPL), 30–36 (QGPPLPL), 39–44 (GPPLPL), and 47–52 (GQLLPL). The tract at residues 23–52 (GLPLPLGQGPPLPLNQGPPLPLNQGQLLPL) is 4 X 6 AA repeats of G-[LPQ]-[PL]-L-P-L. Residues 112–117 (LVGGLL) are important for surfactant activity and antibacterial properties. N-linked (GlcNAc...) asparagine glycans are attached at residues Asn182 and Asn228. Cys204 and Cys246 are oxidised to a cystine.

It belongs to the BPI/LBP/Plunc superfamily. Plunc family. In terms of assembly, monomer. Interacts (via N-terminus) with SCNN1B, a subunit of the heterotrimeric epithelial sodium channel (ENaC); this inhibits proteolytic activation of ENaC. As to expression, detected in airway epithelia (trachea and lung) and in bronchoalveolar fluid (at protein level). Upper airways, nasopharyngeal epithelium and thymus. Highest expression in the trachea and progressive decrease from proximal (bronchial) to distal (bronchiolar) airways. No expression is detected in the terminal bronchioles, respiratory bronchioles or lung alveoli.

Its subcellular location is the secreted. In terms of biological role, lipid-binding protein which shows high specificity for the surfactant phospholipid dipalmitoylphosphatidylcholine (DPPC). Plays a role in the innate immune responses of the upper airways. Reduces the surface tension in secretions from airway epithelia and inhibits the formation of biofilm by pathogenic Gram-negative bacteria, such as P.aeruginosa and K.pneumoniae. Negatively regulates proteolytic cleavage of SCNN1G, an event that is required for activation of the epithelial sodium channel (ENaC), and thereby contributes to airway surface liquid homeostasis and proper clearance of mucus. Plays a role in the airway inflammatory response after exposure to irritants. May attract macrophages and neutrophils. The chain is BPI fold-containing family A member 1 (Bpifa1) from Mus musculus (Mouse).